The sequence spans 394 residues: MQFVLVLNCGSSSLKFAVMNPTSGDVLLNGTAERLGHDVGSLTVKDESGKAVQEIKPGTHAQALELIVETLKTKNLMDKIAAVGHRLVHGGEFFKESVVINNEVREKVAECIRLAPLHNPANITGIEAALKVFPKLPQVGVFDTAFHQQMPEKAYLYPLPRKFYEEFHIRRYGFHGTSFRYIASQLESVTGLKNPRTVVCHLGNGGSLAAIKDGHSVDTTMGLTPLEGIVHGTRCGDIDPAIIQILQKQFHISATEMNEILWKKSGLLGLSGISNDCRSLEEAMAEGNEAAIRALEVYCYRLAKHIAAQMVALNGCDALVFTGGIGENSAFVRANTMEQLAFLGFELDKKANEETSRGKQGKISTANSKPVWVIPTNEELLIARDTAQLSGMTR.

Position 8 (Asn8) interacts with Mg(2+). Lys15 provides a ligand contact to ATP. Arg86 serves as a coordination point for substrate. Asp143 acts as the Proton donor/acceptor in catalysis. ATP is bound by residues 201–205, 276–278, and 324–328; these read HLGNG, DCR, and GIGEN. Mg(2+) is bound at residue Glu378.

Belongs to the acetokinase family. As to quaternary structure, homodimer. Mg(2+) is required as a cofactor. Mn(2+) serves as cofactor.

It localises to the cytoplasm. The enzyme catalyses acetate + ATP = acetyl phosphate + ADP. It participates in metabolic intermediate biosynthesis; acetyl-CoA biosynthesis; acetyl-CoA from acetate: step 1/2. Functionally, catalyzes the formation of acetyl phosphate from acetate and ATP. Can also catalyze the reverse reaction. In Dichelobacter nodosus (strain VCS1703A), this protein is Acetate kinase.